The sequence spans 341 residues: Mitochondrial transcription factor 1 (341 aa).

Positions 23, 77, 101, and 137 each coordinate S-adenosyl-L-methionine.

Belongs to the class I-like SAM-binding methyltransferase superfamily. rRNA adenine N(6)-methyltransferase family.

It is found in the mitochondrion. Mitochondrial transcription factor that confers selective promoter recognition on the core subunit of the yeast mitochondrial RNA polymerase. Interacts with DNA in a non-specific manner. This Saccharomyces paradoxus (Yeast) protein is Mitochondrial transcription factor 1 (MTF1).